We begin with the raw amino-acid sequence, 531 residues long: Cytosolic Fe-S cluster assembly factor NAR1 (531 aa).

Cysteine 20, cysteine 72, cysteine 75, cysteine 78, cysteine 184, and cysteine 239 together coordinate [4Fe-4S] cluster. The tract at residues threonine 395 to valine 426 is disordered. [4Fe-4S] cluster contacts are provided by cysteine 442 and cysteine 446.

Belongs to the NARF family.

In terms of biological role, component of the cytosolic Fe/S protein assembly machinery. Required for maturation of extramitochondrial Fe/S proteins. May play a role in the transfer of pre-assembled Fe/S clusters to target apoproteins. In Meyerozyma guilliermondii (strain ATCC 6260 / CBS 566 / DSM 6381 / JCM 1539 / NBRC 10279 / NRRL Y-324) (Yeast), this protein is Cytosolic Fe-S cluster assembly factor NAR1 (NAR1).